The sequence spans 95 residues: Small ribosomal subunit protein uS19 (95 aa).

Residues 76-95 (PTRRFGGHADKKAATKGQVR) are disordered.

The protein belongs to the universal ribosomal protein uS19 family.

Functionally, protein S19 forms a complex with S13 that binds strongly to the 16S ribosomal RNA. In Pseudothermotoga lettingae (strain ATCC BAA-301 / DSM 14385 / NBRC 107922 / TMO) (Thermotoga lettingae), this protein is Small ribosomal subunit protein uS19.